Consider the following 383-residue polypeptide: VDAFADDLLLLVQGNRRNELEQSASEALSVVYRYGTNIGVEVSDSKTVCMMLKGSLNMLNRVVHVSTNGMDDKRIRCVDRVRYLGVNVGIGMDFSVHIDGMKRRLTTAIMRLRGVLRKSWGLKRGVVSMVVKGLFLPAVMYGASVWYEQLHKRKLRGSRRLSEELVSCQRVVLYACTRVCRTVSTEAMQILFGSLPWDIECFRRANCTKSKGPAMNESDLVTDEDLYELSLHECRELVDQRALAAWQDRWEATSNGRVTYEWIRDVGFSGRSMKYFGAEPEGLLRLTGHGSMNSFLFSRNLSNSPACACGTEREDWIHVLCECDMYAAFRDLDSIGVRRTEVGWDVSGVLLDRASMSVCVPLSSCAFRMRELIVQRMRENEES.

One can recognise a Reverse transcriptase domain in the interval 1–88 (VDAFADDLLL…DRVRYLGVNV (88 aa)). Residues 229 to 383 (LSLHECRELV…VQRMRENEES (155 aa)) form a nucleic acid-binding endonuclease region.

It catalyses the reaction DNA(n) + a 2'-deoxyribonucleoside 5'-triphosphate = DNA(n+1) + diphosphate. The polypeptide is Retrovirus-related Pol polyprotein from type-1 retrotransposable element R1 3 (Nasonia vitripennis (Parasitic wasp)).